Consider the following 852-residue polypeptide: MRVKGIKKNYQHLWRWGGMMLLGILMICSATDKLWVTVYYGVPVWKEANTTLFCASDAKAYDTEIHNVWATHACVPTDPNPQELVMGNVTENFNMWKNDMVEQMHEDIISLWDQSLKPCVKLTPLCVTLNCHDFNATNATSNSGKMMEGGEMKNCSFNITTSIRDKMQKEYALFYKLDIVPIDNDKTNTRYRLISCNTSVITQACPKVTFEPIPIHYCAPAGFAILKCNNKKFNGTGPCTNVSTVQCTHGIRPVVSTQLLLNGSLAEEEVVIRSENFTNNVKTIIVQLNESVEINCTRPNNNTRKRITMGPGRVYYTTGQIIGDIRRAHCNLSRSKWENTLKQIVTKLRVQFKNKTIVFNRSSGGDPEIVMHSFNCGGEFFFCNTTQLFNSTWYRNTTGNITEGNSPITLPCRIKQIINMWQEVGKAMYAPPIRGQIKCSSNITGLLLTRDGGNNNETTDTEIFRPGGGNMRDNWRSELYKYKVVKIEPLGVAPTKAKRRVVQREKRAVGLGALFLGFLGAAGSTMGAASLTLTVQARLLLSGIVQQQNNLLMAIEAQQHMLELTVWGIKQLQARVLAVERYLKDQQLLGIWGCSGKLICTTAVPWNASWSNKSLSDIWDNMTWMEWEREIDNYTNLIYSLIEDSQIQQEKNEKELLELDKWASLWNWFNITNWLWYIKIFIMIVGGLIGLRIVFAVLSIVNRVRQGYSPLSFQTRLPGRRGPDRPEGIEEEGGERDRDRSSPLVDGFLALFWVDLRSLFLFSYHRLRDLLLIVTRIVELLGRRGWEVLKYWWNLLQYWSQELKNSAVSLLNATAIAVGERTDRAIEVVQRAFRAILHIPRRIRQGLERALQ.

The first 32 residues, 1–32, serve as a signal peptide directing secretion; the sequence is MRVKGIKKNYQHLWRWGGMMLLGILMICSATD. Residues 33–680 are Extracellular-facing; that stretch reads KLWVTVYYGV…ITNWLWYIKI (648 aa). Asn-49 carries an N-linked (GlcNAc...) asparagine; by host glycan. A disulfide bridge connects residues Cys-54 and Cys-74. N-linked (GlcNAc...) asparagine; by host glycosylation is found at Asn-88, Asn-135, Asn-138, Asn-154, Asn-158, Asn-197, Asn-234, Asn-241, Asn-262, Asn-276, Asn-289, Asn-295, Asn-301, Asn-331, Asn-354, and Asn-360. 5 disulfide bridges follow: Cys-119–Cys-205, Cys-126–Cys-196, Cys-131–Cys-155, Cys-218–Cys-247, and Cys-228–Cys-239. The tract at residues 131-154 is V1; sequence CHDFNATNATSNSGKMMEGGEMKN. Positions 155 to 196 are V2; that stretch reads CSFNITTSIRDKMQKEYALFYKLDIVPIDNDKTNTRYRLISC. Positions 296 to 329 are V3; sequence CTRPNNNTRKRITMGPGRVYYTTGQIIGDIRRAH. Residues Cys-296 and Cys-330 are joined by a disulfide bond. The CD4-binding loop stretch occupies residues 362-372; it reads SSGGDPEIVMH. 2 cysteine pairs are disulfide-bonded: Cys-376/Cys-439 and Cys-383/Cys-412. The segment at 383 to 412 is V4; it reads CNTTQLFNSTWYRNTTGNITEGNSPITLPC. 6 N-linked (GlcNAc...) asparagine; by host glycosylation sites follow: Asn-384, Asn-390, Asn-396, Asn-400, Asn-442, and Asn-456. 2 V5 regions span residues 454-467 and 457-467; these read NNNE…FRPG and ETTDTEIFRPG. Residues 508–528 form a fusion peptide region; it reads AVGLGALFLGFLGAAGSTMGA. An immunosuppression region spans residues 570 to 588; the sequence is KQLQARVLAVERYLKDQQL. Cys-594 and Cys-600 are oxidised to a cystine. Residues Asn-607, Asn-612, Asn-621, Asn-633, and Asn-670 are each glycosylated (N-linked (GlcNAc...) asparagine; by host). Residues 629–663 are a coiled coil; it reads REIDNYTNLIYSLIEDSQIQQEKNEKELLELDKWA. The MPER; binding to GalCer stretch occupies residues 658–679; that stretch reads ELDKWASLWNWFNITNWLWYIK. A helical membrane pass occupies residues 681–701; that stretch reads FIMIVGGLIGLRIVFAVLSIV. Topologically, residues 702 to 852 are cytoplasmic; it reads NRVRQGYSPL…IRQGLERALQ (151 aa). The YXXL motif; contains endocytosis signal signature appears at 708–711; the sequence is YSPL. Residues 715–741 are disordered; that stretch reads TRLPGRRGPDRPEGIEEEGGERDRDRS.

Belongs to the HIV-1 env protein family. The mature envelope protein (Env) consists of a homotrimer of non-covalently associated gp120-gp41 heterodimers. The resulting complex protrudes from the virus surface as a spike. There seems to be as few as 10 spikes on the average virion. Interacts with host CD4, CCR5 and CXCR4. Gp120 also interacts with the C-type lectins CD209/DC-SIGN and CLEC4M/DC-SIGNR (collectively referred to as DC-SIGN(R)). Gp120 and gp41 interact with GalCer. Gp120 interacts with host ITGA4/ITGB7 complex; on CD4+ T-cells, this interaction results in rapid activation of integrin ITGAL/LFA-1, which facilitates efficient cell-to-cell spreading of HIV-1. Gp120 interacts with cell-associated heparan sulfate; this interaction increases virus infectivity on permissive cells and may be involved in infection of CD4- cells. In terms of assembly, the mature envelope protein (Env) consists of a homotrimer of non-covalently associated gp120-gp41 heterodimers. The resulting complex protrudes from the virus surface as a spike. There seems to be as few as 10 spikes on the average virion. Post-translationally, highly glycosylated by host. The high number of glycan on the protein is reffered to as 'glycan shield' because it contributes to hide protein sequence from adaptive immune system. Palmitoylation of the transmembrane protein and of Env polyprotein (prior to its proteolytic cleavage) is essential for their association with host cell membrane lipid rafts. Palmitoylation is therefore required for envelope trafficking to classical lipid rafts, but not for viral replication. In terms of processing, specific enzymatic cleavages in vivo yield mature proteins. Envelope glycoproteins are synthesized as an inactive precursor that is heavily N-glycosylated and processed likely by host cell furin in the Golgi to yield the mature SU and TM proteins. The cleavage site between SU and TM requires the minimal sequence [KR]-X-[KR]-R. About 2 of the 9 disulfide bonds of gp41 are reduced by P4HB/PDI, following binding to CD4 receptor.

Its subcellular location is the virion membrane. It localises to the host cell membrane. It is found in the host endosome membrane. Functionally, oligomerizes in the host endoplasmic reticulum into predominantly trimers. In a second time, gp160 transits in the host Golgi, where glycosylation is completed. The precursor is then proteolytically cleaved in the trans-Golgi and thereby activated by cellular furin or furin-like proteases to produce gp120 and gp41. Its function is as follows. Attaches the virus to the host lymphoid cell by binding to the primary receptor CD4. This interaction induces a structural rearrangement creating a high affinity binding site for a chemokine coreceptor like CXCR4 and/or CCR5. Acts as a ligand for CD209/DC-SIGN and CLEC4M/DC-SIGNR, which are respectively found on dendritic cells (DCs), and on endothelial cells of liver sinusoids and lymph node sinuses. These interactions allow capture of viral particles at mucosal surfaces by these cells and subsequent transmission to permissive cells. HIV subverts the migration properties of dendritic cells to gain access to CD4+ T-cells in lymph nodes. Virus transmission to permissive T-cells occurs either in trans (without DCs infection, through viral capture and transmission), or in cis (following DCs productive infection, through the usual CD4-gp120 interaction), thereby inducing a robust infection. In trans infection, bound virions remain infectious over days and it is proposed that they are not degraded, but protected in non-lysosomal acidic organelles within the DCs close to the cell membrane thus contributing to the viral infectious potential during DCs' migration from the periphery to the lymphoid tissues. On arrival at lymphoid tissues, intact virions recycle back to DCs' cell surface allowing virus transmission to CD4+ T-cells. Acts as a class I viral fusion protein. Under the current model, the protein has at least 3 conformational states: pre-fusion native state, pre-hairpin intermediate state, and post-fusion hairpin state. During fusion of viral and target intracellular membranes, the coiled coil regions (heptad repeats) assume a trimer-of-hairpins structure, positioning the fusion peptide in close proximity to the C-terminal region of the ectodomain. The formation of this structure appears to drive apposition and subsequent fusion of viral and target cell membranes. Complete fusion occurs in host cell endosomes and is dynamin-dependent, however some lipid transfer might occur at the plasma membrane. The virus undergoes clathrin-dependent internalization long before endosomal fusion, thus minimizing the surface exposure of conserved viral epitopes during fusion and reducing the efficacy of inhibitors targeting these epitopes. Membranes fusion leads to delivery of the nucleocapsid into the cytoplasm. This is Envelope glycoprotein gp160 from Human immunodeficiency virus type 1 group M subtype B (isolate BRVA) (HIV-1).